The primary structure comprises 122 residues: Large ribosomal subunit protein uL14 (122 aa).

This sequence belongs to the universal ribosomal protein uL14 family. Part of the 50S ribosomal subunit. Forms a cluster with proteins L3 and L19. In the 70S ribosome, L14 and L19 interact and together make contacts with the 16S rRNA in bridges B5 and B8.

Functionally, binds to 23S rRNA. Forms part of two intersubunit bridges in the 70S ribosome. This is Large ribosomal subunit protein uL14 from Bacillus velezensis (strain DSM 23117 / BGSC 10A6 / LMG 26770 / FZB42) (Bacillus amyloliquefaciens subsp. plantarum).